We begin with the raw amino-acid sequence, 471 residues long: SVGFKAGVKEYKLTYYTPEYETKDTDILAAFRVTPQPGVPPEEAGAAVAAESSTGTWTTVWTDGLTSLDRYKGRCYGIEPVPGEENQYIAYVAYPLDLFEEGSVTNMFTSIVGNVFGFKALRALRLEDLRIPTAYIKTFQGPPHGIQVERDKLNKYGRPLLGCTIKPKLGLSAKNYGRAVYECLRGGLDFTKDDETVTSQPFMRWRDRFLFRAEAIYKAQAEPGEIKGHYLNATAGTCEEMMKRAVFARELGIPIVMHDYLTGGFTANTSLAHYCRDNGLLLHIHRAMHAVIDRQKNHGMHFRLLAKALRMSGGDHIHAGTVVGKLEGERDITLGFVDLLRDDFIENDRSRGIYFTQDWVSLPGVIPVASGGIHVWHMPALTEIFGDDSVLQFGGGTLGHPWGNAPGAVANRVALEACVQARNEGRDLAAEGNEIIREASKWSPELAAACEIWKEIRFNFAAMDTLDPLKS.

K5 bears the N6,N6,N6-trimethyllysine mark. Positions 114 and 164 each coordinate substrate. The Proton acceptor role is filled by K166. K168 serves as a coordination point for substrate. Residues K192, D194, and E195 each coordinate Mg(2+). K192 bears the N6-carboxylysine mark. H285 acts as the Proton acceptor in catalysis. 3 residues coordinate substrate: R286, H318, and S370.

Belongs to the RuBisCO large chain family. Type I subfamily. Heterohexadecamer of 8 large chains and 8 small chains; disulfide-linked. The disulfide link is formed within the large subunit homodimers. Mg(2+) serves as cofactor. The disulfide bond which can form in the large chain dimeric partners within the hexadecamer appears to be associated with oxidative stress and protein turnover.

Its subcellular location is the plastid. The protein localises to the chloroplast. It carries out the reaction 2 (2R)-3-phosphoglycerate + 2 H(+) = D-ribulose 1,5-bisphosphate + CO2 + H2O. The enzyme catalyses D-ribulose 1,5-bisphosphate + O2 = 2-phosphoglycolate + (2R)-3-phosphoglycerate + 2 H(+). Functionally, ruBisCO catalyzes two reactions: the carboxylation of D-ribulose 1,5-bisphosphate, the primary event in carbon dioxide fixation, as well as the oxidative fragmentation of the pentose substrate in the photorespiration process. Both reactions occur simultaneously and in competition at the same active site. In Anthocleista grandiflora (Forest fever tree), this protein is Ribulose bisphosphate carboxylase large chain.